The sequence spans 59 residues: Large ribosomal subunit protein uL30 (59 aa).

It belongs to the universal ribosomal protein uL30 family. In terms of assembly, part of the 50S ribosomal subunit.

The protein is Large ribosomal subunit protein uL30 of Leptospira biflexa serovar Patoc (strain Patoc 1 / ATCC 23582 / Paris).